The chain runs to 312 residues: Olfactory receptor 6C76 (312 aa).

Over 1–23 (MKNRTSVTDFILLGLTDNPQLQV) the chain is Extracellular. N3 is a glycosylation site (N-linked (GlcNAc...) asparagine). A helical transmembrane segment spans residues 24 to 44 (VIFSFLFLTYVLSVTGNLTII). Topologically, residues 45–57 (SLTLLDSHLKTPM) are cytoplasmic. The helical transmembrane segment at 58–80 (YFFLRNFSLEISFTSVCNPRFLI) threads the bilayer. Over 81–94 (SILTGDKSISYNAC) the chain is Extracellular. A disulfide bridge links C94 with C176. The chain crosses the membrane as a helical span at residues 95–115 (AAQLFFFIFLGSTEFFLLASM). Topologically, residues 116 to 142 (SYDCYVAICKPLHYTTIMSDRICYQLI) are cytoplasmic. Residues 143-163 (ISSWLAGFLVIFPPLAMGLQL) form a helical membrane-spanning segment. The Extracellular portion of the chain corresponds to 164–195 (DFCDSNVIDHFTCDSAPLLQISCTDTSTLELM). A helical transmembrane segment spans residues 196–216 (SFILALFTLISTLILVILSYT). Over 217-238 (YIIRTILRIPSAQQRKKAFSTC) the chain is Cytoplasmic. Residues 239–259 (SSHVIVVSISYGSCIFMYVKT) form a helical membrane-spanning segment. Over 260–267 (SAKEGVAL) the chain is Extracellular. Residues 268–288 (TKGVAILNTSVAPMLNPFIYT) form a helical membrane-spanning segment. At 289–312 (LRNQQVKQAFKDVLRKISHKKKKH) the chain is on the cytoplasmic side.

It belongs to the G-protein coupled receptor 1 family.

It is found in the cell membrane. Odorant receptor. The chain is Olfactory receptor 6C76 (OR6C76) from Homo sapiens (Human).